A 194-amino-acid chain; its full sequence is Large ribosomal subunit protein bL9 (194 aa).

A disordered region spans residues 167-194 (EDRAAEAEAASDMAAGGAGSFEGDHYES).

The protein belongs to the bacterial ribosomal protein bL9 family.

In terms of biological role, binds to the 23S rRNA. The chain is Large ribosomal subunit protein bL9 from Caulobacter sp. (strain K31).